The sequence spans 276 residues: NH(3)-dependent NAD(+) synthetase (276 aa).

51 to 58 (GISGGVDS) contributes to the ATP binding site. Mg(2+) is bound at residue Asp57. Residue Arg148 coordinates deamido-NAD(+). Residue Thr168 participates in ATP binding. Glu173 serves as a coordination point for Mg(2+). 2 residues coordinate deamido-NAD(+): Lys181 and Asp188. Positions 197 and 219 each coordinate ATP. 268–269 (HK) serves as a coordination point for deamido-NAD(+).

It belongs to the NAD synthetase family. As to quaternary structure, homodimer.

The catalysed reaction is deamido-NAD(+) + NH4(+) + ATP = AMP + diphosphate + NAD(+) + H(+). It functions in the pathway cofactor biosynthesis; NAD(+) biosynthesis; NAD(+) from deamido-NAD(+) (ammonia route): step 1/1. Catalyzes the ATP-dependent amidation of deamido-NAD to form NAD. Uses ammonia as a nitrogen source. The polypeptide is NH(3)-dependent NAD(+) synthetase (Streptomyces coelicolor (strain ATCC BAA-471 / A3(2) / M145)).